Here is a 230-residue protein sequence, read N- to C-terminus: UPF0173 metal-dependent hydrolase Dshi_2788 (230 aa).

Belongs to the UPF0173 family.

The polypeptide is UPF0173 metal-dependent hydrolase Dshi_2788 (Dinoroseobacter shibae (strain DSM 16493 / NCIMB 14021 / DFL 12)).